The chain runs to 367 residues: UDP-N-acetylenolpyruvoylglucosamine reductase (367 aa).

Positions 29-205 (VGPVAQRVIT…LEVEFKLDAS (177 aa)) constitute an FAD-binding PCMH-type domain. Arg-177 is an active-site residue. Catalysis depends on Ser-260, which acts as the Proton donor. Glu-359 is a catalytic residue.

Belongs to the MurB family. The cofactor is FAD.

The protein localises to the cytoplasm. It catalyses the reaction UDP-N-acetyl-alpha-D-muramate + NADP(+) = UDP-N-acetyl-3-O-(1-carboxyvinyl)-alpha-D-glucosamine + NADPH + H(+). It participates in cell wall biogenesis; peptidoglycan biosynthesis. Its function is as follows. Cell wall formation. The polypeptide is UDP-N-acetylenolpyruvoylglucosamine reductase (Mycobacterium leprae (strain Br4923)).